The primary structure comprises 110 residues: UPF0060 membrane protein SACE_5620 (110 aa).

4 consecutive transmembrane segments (helical) span residues 8 to 28 (VVLF…VWQG), 34 to 54 (GLLW…VATF), 63 to 83 (ILAA…VVVD), and 89 to 109 (RWDL…MYAP).

Belongs to the UPF0060 family.

The protein localises to the cell membrane. The polypeptide is UPF0060 membrane protein SACE_5620 (Saccharopolyspora erythraea (strain ATCC 11635 / DSM 40517 / JCM 4748 / NBRC 13426 / NCIMB 8594 / NRRL 2338)).